The following is a 577-amino-acid chain: Arginine--tRNA ligase (577 aa).

The short motif at proline 122–histidine 132 is the 'HIGH' region element.

It belongs to the class-I aminoacyl-tRNA synthetase family. As to quaternary structure, monomer.

The protein resides in the cytoplasm. The catalysed reaction is tRNA(Arg) + L-arginine + ATP = L-arginyl-tRNA(Arg) + AMP + diphosphate. The protein is Arginine--tRNA ligase of Shigella flexneri serotype 5b (strain 8401).